The sequence spans 409 residues: tRNA-specific 2-thiouridylase MnmA (409 aa).

Residues G40–S47 and L66 each bind ATP. C127 functions as the Nucleophile in the catalytic mechanism. C127 and C237 form a disulfide bridge. Position 152 (G152) interacts with ATP. Residues R156–L179 are disordered. The interval K187–Q189 is interaction with tRNA. C237 (cysteine persulfide intermediate) is an active-site residue. The tract at residues R342 to Y343 is interaction with tRNA.

This sequence belongs to the MnmA/TRMU family.

It is found in the cytoplasm. The catalysed reaction is S-sulfanyl-L-cysteinyl-[protein] + uridine(34) in tRNA + AH2 + ATP = 2-thiouridine(34) in tRNA + L-cysteinyl-[protein] + A + AMP + diphosphate + H(+). In terms of biological role, catalyzes the 2-thiolation of uridine at the wobble position (U34) of tRNA, leading to the formation of s(2)U34. The chain is tRNA-specific 2-thiouridylase MnmA from Prochlorococcus marinus (strain MIT 9303).